The primary structure comprises 256 residues: Pimeloyl-[acyl-carrier protein] methyl ester esterase (256 aa).

An AB hydrolase-1 domain is found at 15 to 242 (HLVLLHGWGL…AAHAPFISHP (228 aa)). Substrate-binding positions include tryptophan 22, 82–83 (SL), and 143–147 (FLALQ). Serine 82 functions as the Nucleophile in the catalytic mechanism. Catalysis depends on residues aspartate 207 and histidine 235. Histidine 235 provides a ligand contact to substrate.

Belongs to the AB hydrolase superfamily. Carboxylesterase BioH family. As to quaternary structure, monomer.

It localises to the cytoplasm. It catalyses the reaction 6-carboxyhexanoyl-[ACP] methyl ester + H2O = 6-carboxyhexanoyl-[ACP] + methanol + H(+). It participates in cofactor biosynthesis; biotin biosynthesis. The physiological role of BioH is to remove the methyl group introduced by BioC when the pimeloyl moiety is complete. It allows to synthesize pimeloyl-ACP via the fatty acid synthetic pathway through the hydrolysis of the ester bonds of pimeloyl-ACP esters. The chain is Pimeloyl-[acyl-carrier protein] methyl ester esterase from Escherichia coli O45:K1 (strain S88 / ExPEC).